A 200-amino-acid polypeptide reads, in one-letter code: Peptidyl-tRNA hydrolase (200 aa).

A tRNA-binding site is contributed by Tyr15. The active-site Proton acceptor is the His20. TRNA is bound by residues Tyr66, Asn68, and Asn114.

This sequence belongs to the PTH family. Monomer.

The protein resides in the cytoplasm. The catalysed reaction is an N-acyl-L-alpha-aminoacyl-tRNA + H2O = an N-acyl-L-amino acid + a tRNA + H(+). Its function is as follows. Hydrolyzes ribosome-free peptidyl-tRNAs (with 1 or more amino acids incorporated), which drop off the ribosome during protein synthesis, or as a result of ribosome stalling. In terms of biological role, catalyzes the release of premature peptidyl moieties from peptidyl-tRNA molecules trapped in stalled 50S ribosomal subunits, and thus maintains levels of free tRNAs and 50S ribosomes. The chain is Peptidyl-tRNA hydrolase from Paraburkholderia phytofirmans (strain DSM 17436 / LMG 22146 / PsJN) (Burkholderia phytofirmans).